The primary structure comprises 295 residues: Porphobilinogen deaminase (295 aa).

Residue C241 is modified to S-(dipyrrolylmethanemethyl)cysteine.

Belongs to the HMBS family. In terms of assembly, monomer. It depends on dipyrromethane as a cofactor.

The enzyme catalyses 4 porphobilinogen + H2O = hydroxymethylbilane + 4 NH4(+). It participates in porphyrin-containing compound metabolism; protoporphyrin-IX biosynthesis; coproporphyrinogen-III from 5-aminolevulinate: step 2/4. In terms of biological role, tetrapolymerization of the monopyrrole PBG into the hydroxymethylbilane pre-uroporphyrinogen in several discrete steps. This chain is Porphobilinogen deaminase, found in Lachnospira eligens (strain ATCC 27750 / DSM 3376 / VPI C15-48 / C15-B4) (Eubacterium eligens).